Here is a 469-residue protein sequence, read N- to C-terminus: Protopanaxadiol 6-hydroxylase (469 aa).

A helical membrane pass occupies residues 3–23; that stretch reads LFISSQLLLLLVFCLFLFWNF. C416 is a binding site for heme.

This sequence belongs to the cytochrome P450 family. Heme is required as a cofactor. As to expression, accumulates ubiquitously in all organs of plants, including roots, stems and leaves.

It is found in the membrane. It catalyses the reaction (20S)-protopanaxadiol + reduced [NADPH--hemoprotein reductase] + O2 = (20S)-protopanaxatriol + oxidized [NADPH--hemoprotein reductase] + H2O + H(+). Its pathway is secondary metabolite biosynthesis; terpenoid biosynthesis. With respect to regulation, activated by N,N'-dicyclohexylcarbodiimide (DCCD) thus leading to increased ginsenosides accumulation. In terms of biological role, component of the dammarane-type triterpene saponins (e.g. PPT-type ginsenosides or panaxosides) biosynthetic pathway. Catalyzes the formation of protopanaxatriol from protopanaxadiol during ginsenoside biosynthesis, a class of tetracyclic triterpenoid saponins. This Panax ginseng (Korean ginseng) protein is Protopanaxadiol 6-hydroxylase.